The chain runs to 173 residues: MPRSNRNDNFIDKSFTVMADLIVKLLPINARAKEAYVYYRDGLSAQNDGDYAEALENYEESLKLEENPIDRGETLKNMAIIYMSNGEEDRALATYQKALDENPKQPSCLKNMGLIFEKRGRTAEEEGRRDDADGWFDQAAEVWTQAVRLNPGGYLDIENWLKSTGRSNVDVYF.

3 TPR repeats span residues 35 to 68 (AYVYYRDGLSAQNDGDYAEALENYEESLKLEENP), 72 to 105 (GETLKNMAIIYMSNGEEDRALATYQKALDENPKQ), and 120 to 153 (GRTAEEEGRRDDADGWFDQAAEVWTQAVRLNPGG).

This sequence belongs to the Ycf3 family.

Its subcellular location is the cellular thylakoid membrane. Essential for the assembly of the photosystem I (PSI) complex. May act as a chaperone-like factor to guide the assembly of the PSI subunits. The chain is Photosystem I assembly protein Ycf3 from Synechococcus sp. (strain WH7803).